The primary structure comprises 7192 residues: Nonribosomal peptide synthetase gloA (7192 aa).

Positions 1–48 (MTPSRSLENGEKQMNWNESPQTASPKNVLRDSNSNGNYVNGHGTNING) are enriched in polar residues. A disordered region spans residues 1-52 (MTPSRSLENGEKQMNWNESPQTASPKNVLRDSNSNGNYVNGHGTNINGDGSD). In terms of domain architecture, Carrier 1 spans 105-181 (HSTSKFKEEF…GLFATANFRP (77 aa)). Serine 142 carries the post-translational modification O-(pantetheine 4'-phosphoryl)serine. The segment at 239–634 (EDVYPCTPLQ…TYTVQCLCNP (396 aa)) is condensation 1. Positions 675–1047 (QDQVNIQPAK…SLMYLGRCDS (373 aa)) are adenylation 1. The 77-residue stretch at 1190 to 1266 (APSTDAEKQV…DLAFVIQRRL (77 aa)) folds into the Carrier 2 domain. Serine 1227 is modified (O-(pantetheine 4'-phosphoryl)serine). A condensation 2 region spans residues 1316 to 1736 (EDIYPCTPLQ…MSWLSDYDEE (421 aa)). The segment at 1758 to 2154 (QEQTKLRPNA…GRRDTQIKIR (397 aa)) is adenylation 2. A Carrier 3 domain is found at 2288–2364 (APSTREECLV…ELAELLAKRS (77 aa)). Residue serine 2325 is modified to O-(pantetheine 4'-phosphoryl)serine. The segment at 2407 to 2829 (VEDVYPCTPL…LIAPEDQEQI (423 aa)) is condensation 3. An adenylation 3 region spans residues 2849 to 3245 (YKQVMARPQA…GRRDDQIKIR (397 aa)). The region spanning 3378-3455 (TPSTKMEKVI…DLASVMTEHR (78 aa)) is the Carrier 4 domain. Serine 3415 carries the O-(pantetheine 4'-phosphoryl)serine modification. The tract at residues 3502–3891 (EDIYPCTALQ…NGVLDQFVYI (390 aa)) is condensation 4. An adenylation 4 region spans residues 3920–4320 (QEQALARPTA…ARRDMQVKIR (401 aa)). The region spanning 4453–4529 (LPSTQVELQL…ELAVILDGRK (77 aa)) is the Carrier 5 domain. An O-(pantetheine 4'-phosphoryl)serine modification is found at serine 4490. The segment at 4574–4971 (EDIYPCTPLQ…QFEYVVQKFH (398 aa)) is condensation 5. Residues 5013 to 5414 (DDHVAARPMA…GRQDLQVKIR (402 aa)) form an adenylation 5 region. In terms of domain architecture, Carrier 6 spans 5551-5627 (APDTDLGRLI…DLVNTLSNRS (77 aa)). Serine 5588 carries the O-(pantetheine 4'-phosphoryl)serine modification. The condensation 6 stretch occupies residues 5674–6071 (EDVYPSTPLQ…CVVQRILTQS (398 aa)). The tract at residues 6111–6507 (QAQVKKSPAA…GRRDLQVKIR (397 aa)) is adenylation 6. Residues 6645 to 6721 (NPSTTMERQL…DLAVVLTDRL (77 aa)) enclose the Carrier 7 domain. Serine 6682 is subject to O-(pantetheine 4'-phosphoryl)serine. The tract at residues 6795-7178 (NGPCDTRALK…NPLSPVKQVL (384 aa)) is condensation 7.

This sequence belongs to the NRP synthetase family.

The protein operates within mycotoxin biosynthesis. Functionally, nonribosomal peptide synthetase; part of the gene cluster that mediates the biosynthesis of pneumocandins, lipohexapeptides of the echinocandin family that prevent fungal cell wall formation by non-competitive inhibition of beta-1,3-glucan synthase. The 10,12-dimethylmyristoyl side chain is synthesized by the reducing polyketide synthase gloL/GLPKS4. The thioesterase gloN/GLHYD exclusively interacts with gloL/GLPKS4 to maintain turnover of the polyketide side chain. The 10R,12S-dimethylmyristic acid is then transferred to the first thiolation domain of the nonribosomal peptide synthetase gloA/GLNRPS4 by the acyl-AMP ligase gloD/GLligase, followed by its acylation to L-ornithine to trigger elongation of the cyclic hexapeptide. L-ornithine, 4R-hydroxyl-L-proline (generated from L-proline by the dioxygenase gloF/GLOXY2), 3S-hydroxyl-L-homotyrosine (generated by gloG/GLHtyB, gloH/GLHtyA, gloI/GLHtyC, gloJ/GLHtyD and hydroxylated at C-3 by the dioxygenase gloM/GLOXY1), 3R-hydroxyl-L-glutamine (generated from L-glutamine probably by the dioxygenase gloE/GLOXY3) and 3S-hydroxyl-L-proline (generated from L-proline by the dioxygenase gloF/GLOXY2 to yield pneumocandin B0), or 3S-hydroxyl-4S-methyl-L-proline (generated from L-leucine by the dioxygenase gloC/GLOXY4 to yield pneumocandin A0) are sequentially added to the growing chain. The last C domain of gloA/GLNRPS4 is proposed to be responsible for cyclization by condensation to form the peptide bond between L-ornithine and 3S-hydroxyl-4S-methyl-L-proline (for pneumocandin A0) or 3S-hydroxyl-L-proline (for pneumocandin B0). Finally, the subsequent C-4 hydroxylation of 3S-hydroxyl-L-homotyrosine and L-ornithine dihydroxylation at C-4 and C-5 are performed by the cytochrome P450 monooxygenases gloP/GLP450-1 and gloO/GLP450-2, respectively. This chain is Nonribosomal peptide synthetase gloA, found in Glarea lozoyensis (strain ATCC 20868 / MF5171).